The sequence spans 284 residues: Protein SCO1 homolog, mitochondrial (284 aa).

The disordered stretch occupies residues 46–73 (RAFSAGPPPPGAGPEPKGGQAGSHRPKP). A helical membrane pass occupies residues 81 to 98 (LALTFAIGGSLLAGMKYF). The Mitochondrial intermembrane portion of the chain corresponds to 99 to 284 (KKEKIEKLEK…AHMRSHMKKR (186 aa)). The tract at residues 101–114 (EKIEKLEKQRHRSI) is important for dimerization. Cu cation is bound by residues cysteine 152, cysteine 156, and histidine 243. Cysteines 152 and 156 form a disulfide.

Belongs to the SCO1/2 family. As to quaternary structure, homodimer. Interacts with COA6. Found in a complex with TMEM177, COX20, COA6, MT-CO2/COX2, COX18 and SCO2. Interacts with TMEM177 in a COX20-dependent manner. Interacts with COX20 in a MT-CO2/COX2- and COX18-dependent manner. Interacts with COX16.

Its subcellular location is the mitochondrion. The protein localises to the mitochondrion inner membrane. In terms of biological role, copper metallochaperone essential for the maturation of cytochrome c oxidase subunit II (MT-CO2/COX2). Not required for the synthesis of MT-CO2/COX2 but plays a crucial role in stabilizing MT-CO2/COX2 during its subsequent maturation. Involved in transporting copper to the Cu(A) site on MT-CO2/COX2. Plays an important role in the regulation of copper homeostasis by controlling the abundance and cell membrane localization of copper transporter CTR1. The polypeptide is Protein SCO1 homolog, mitochondrial (Sco1) (Mus musculus (Mouse)).